The following is a 141-amino-acid chain: Hemoglobin subunit alpha (141 aa).

The region spanning valine 1–arginine 141 is the Globin domain. The residue at position 3 (serine 3) is a Phosphoserine. Lysine 7 is subject to N6-succinyllysine. Threonine 8 bears the Phosphothreonine mark. Lysine 11 is subject to N6-succinyllysine. Lysine 16 carries the N6-acetyllysine; alternate modification. Lysine 16 carries the post-translational modification N6-succinyllysine; alternate. Tyrosine 24 carries the phosphotyrosine modification. Serine 35 is subject to Phosphoserine. Lysine 40 carries the post-translational modification N6-succinyllysine. Serine 49 carries the post-translational modification Phosphoserine. Histidine 58 is a binding site for O2. Histidine 87 provides a ligand contact to heme b. Position 102 is a phosphoserine (serine 102). Threonine 108 is subject to Phosphothreonine. Serine 124 carries the post-translational modification Phosphoserine. Residues threonine 134 and threonine 137 each carry the phosphothreonine modification. Serine 138 bears the Phosphoserine mark.

It belongs to the globin family. Heterotetramer of two alpha chains and two beta chains. As to expression, red blood cells.

Functionally, involved in oxygen transport from the lung to the various peripheral tissues. Its function is as follows. Hemopressin acts as an antagonist peptide of the cannabinoid receptor CNR1. Hemopressin-binding efficiently blocks cannabinoid receptor CNR1 and subsequent signaling. The sequence is that of Hemoglobin subunit alpha (HBA) from Odobenus rosmarus divergens (Pacific walrus).